A 45-amino-acid chain; its full sequence is Large ribosomal subunit protein bL36 (45 aa).

The protein belongs to the bacterial ribosomal protein bL36 family.

The chain is Large ribosomal subunit protein bL36 from Aliivibrio salmonicida (strain LFI1238) (Vibrio salmonicida (strain LFI1238)).